The following is a 146-amino-acid chain: Probable trivalent organoarsenical cleaving enzyme (146 aa).

The region spanning 2–118 (KYVHVGVNVV…DGNEWEFFYT (117 aa)) is the VOC domain. Residues histidine 5 and histidine 62 each coordinate Fe(2+). Roxarsone (III) contacts are provided by cysteine 95 and cysteine 96. Fe(2+) is bound at residue glutamate 114.

The protein to M.tuberculosis Rv2641. Requires Fe(2+) as cofactor.

It carries out the reaction methylarsonous acid + AH2 + O2 = arsenite + methanol + A + H(+). The catalysed reaction is roxarsone (III) + AH2 + O2 = 4-hydroxy-3-nitrocyclohexa-2,5-dien-1-one + arsenite + A + H(+). It catalyses the reaction nitarsone (III) + AH2 + O2 = 4-nitrocyclohexa-2,5-dien-1-one + arsenite + A + H(+). The enzyme catalyses 4-aminophenylarsonous acid + AH2 + O2 = 4-aminocyclohexa-2,5-dien-1-one + arsenite + A. In terms of biological role, nonheme iron-dependent dioxygenase that can break carbon-arsenic bonds, playing a role in the detoxification of environmental organoarsenical compounds. Catalyzes the oxygen-dependent demethylation of highly toxic methylarsonous acid (MAs(III)) to arsenite, which can then be exported out of the cell. Can also cleave the C-As bond in several trivalent aromatic arsenicals, including roxarsone (III), nitarsone (III) and (4-aminophenyl)arsonous acid. Organoarsenical degradation by this enzyme is proposed to have a significant impact on the arsenic biogeocycle that maintains a balance between organic and inorganic species. The sequence is that of Probable trivalent organoarsenical cleaving enzyme (yqcK) from Bacillus subtilis (strain 168).